Here is a 496-residue protein sequence, read N- to C-terminus: Lysine--tRNA ligase (496 aa).

Residues E409 and E416 each contribute to the Mg(2+) site.

Belongs to the class-II aminoacyl-tRNA synthetase family. As to quaternary structure, homodimer. Mg(2+) serves as cofactor.

The protein localises to the cytoplasm. It catalyses the reaction tRNA(Lys) + L-lysine + ATP = L-lysyl-tRNA(Lys) + AMP + diphosphate. The protein is Lysine--tRNA ligase of Streptococcus gordonii (strain Challis / ATCC 35105 / BCRC 15272 / CH1 / DL1 / V288).